Reading from the N-terminus, the 94-residue chain is Large ribosomal subunit protein uL23 (94 aa).

It belongs to the universal ribosomal protein uL23 family. As to quaternary structure, part of the 50S ribosomal subunit. Contacts protein L29, and trigger factor when it is bound to the ribosome.

In terms of biological role, one of the early assembly proteins it binds 23S rRNA. One of the proteins that surrounds the polypeptide exit tunnel on the outside of the ribosome. Forms the main docking site for trigger factor binding to the ribosome. The chain is Large ribosomal subunit protein uL23 from Exiguobacterium sibiricum (strain DSM 17290 / CCUG 55495 / CIP 109462 / JCM 13490 / 255-15).